The sequence spans 616 residues: Dihydroxy-acid dehydratase (616 aa).

Aspartate 81 contributes to the Mg(2+) binding site. Cysteine 122 lines the [2Fe-2S] cluster pocket. The Mg(2+) site is built by aspartate 123 and lysine 124. Lysine 124 is subject to N6-carboxylysine. [2Fe-2S] cluster is bound at residue cysteine 195. Mg(2+) is bound at residue glutamate 491. Serine 517 serves as the catalytic Proton acceptor.

The protein belongs to the IlvD/Edd family. As to quaternary structure, homodimer. It depends on [2Fe-2S] cluster as a cofactor. Mg(2+) is required as a cofactor.

The catalysed reaction is (2R)-2,3-dihydroxy-3-methylbutanoate = 3-methyl-2-oxobutanoate + H2O. It catalyses the reaction (2R,3R)-2,3-dihydroxy-3-methylpentanoate = (S)-3-methyl-2-oxopentanoate + H2O. Its pathway is amino-acid biosynthesis; L-isoleucine biosynthesis; L-isoleucine from 2-oxobutanoate: step 3/4. It participates in amino-acid biosynthesis; L-valine biosynthesis; L-valine from pyruvate: step 3/4. In terms of biological role, functions in the biosynthesis of branched-chain amino acids. Catalyzes the dehydration of (2R,3R)-2,3-dihydroxy-3-methylpentanoate (2,3-dihydroxy-3-methylvalerate) into 2-oxo-3-methylpentanoate (2-oxo-3-methylvalerate) and of (2R)-2,3-dihydroxy-3-methylbutanoate (2,3-dihydroxyisovalerate) into 2-oxo-3-methylbutanoate (2-oxoisovalerate), the penultimate precursor to L-isoleucine and L-valine, respectively. This is Dihydroxy-acid dehydratase from Pectobacterium carotovorum subsp. carotovorum (strain PC1).